The primary structure comprises 193 residues: Probable GTP-binding protein EngB (193 aa).

The EngB-type G domain maps to 22-193 (LLPEVALAGR…AAWEAIYRHL (172 aa)). Residues 30–37 (GRSNVGKS), 57–61 (GKTQT), 75–78 (DVPG), 142–145 (TKLD), and 174–176 (FSS) each bind GTP. S37 and T59 together coordinate Mg(2+).

It belongs to the TRAFAC class TrmE-Era-EngA-EngB-Septin-like GTPase superfamily. EngB GTPase family. Requires Mg(2+) as cofactor.

Its function is as follows. Necessary for normal cell division and for the maintenance of normal septation. The polypeptide is Probable GTP-binding protein EngB (Exiguobacterium sibiricum (strain DSM 17290 / CCUG 55495 / CIP 109462 / JCM 13490 / 255-15)).